A 193-amino-acid chain; its full sequence is Urease accessory protein UreE (193 aa).

Residues 138–193 form a disordered region; it reads RGAYHSHGAHSHDQGHAAHDHGNEHKHDHGHDHVHGPGCDHDHDHDHGHHHDHKHD. Positions 147–193 are enriched in basic and acidic residues; the sequence is HSHDQGHAAHDHGNEHKHDHGHDHVHGPGCDHDHDHDHGHHHDHKHD.

This sequence belongs to the UreE family.

The protein localises to the cytoplasm. Its function is as follows. Involved in urease metallocenter assembly. Binds nickel. Probably functions as a nickel donor during metallocenter assembly. This is Urease accessory protein UreE from Rhizobium leguminosarum bv. trifolii (strain WSM2304).